The primary structure comprises 1323 residues: Glutamate receptor ionotropic, NMDA 2D (1323 aa).

Positions 1–27 (MRGAGGPRGPRGPAKMLLLLALACASP) are cleaved as a signal peptide. Residues 28-579 (FPEEVPGPGA…SPSAFLEPYS (552 aa)) are Extracellular-facing. N89 carries N-linked (GlcNAc...) asparagine glycosylation. C101 and C345 are disulfide-bonded. 4 N-linked (GlcNAc...) asparagine glycosylation sites follow: N349, N363, N381, and N464. 2 disulfides stabilise this stretch: C452–C480 and C459–C481. The L-glutamate site is built by S536, T538, and R543. N566 is a glycosylation site (N-linked (GlcNAc...) asparagine). A helical transmembrane segment spans residues 580 to 601 (PAVWVMMFVMCLTVVAVTVFIF). Residues 602–626 (EYLSPVGYNRSLATGKRPGGSTFTI) are Cytoplasmic-facing. Residues 627–638 (GKSIWLLWALVF) constitute an intramembrane region (discontinuously helical). The tract at residues 628–647 (KSIWLLWALVFNNSVPVENP) is pore-forming. Residues 639 to 650 (NNSVPVENPRGT) are Cytoplasmic-facing. The chain crosses the membrane as a helical span at residues 651 to 671 (TSKIMVLVWAFFAVIFLASYT). At 672-840 (ANLAAFMIQE…EVMSSKLDID (169 aa)) the chain is on the extracellular side. Residue N712 is glycosylated (N-linked (GlcNAc...) asparagine). The L-glutamate site is built by S714, T715, and D756. Cysteines 770 and 825 form a disulfide. Residues 841–864 (NMAGVFYMLLVAMGLSLLVFAWEH) traverse the membrane as a helical segment. The Cytoplasmic segment spans residues 865–1323 (LVYWRLRHCL…AHFSSLESEV (459 aa)). Disordered stretches follow at residues 897–952 (EAAP…PGGA), 977–1112 (AAPR…SLGG), and 1201–1323 (PWAA…ESEV). Positions 899-929 (APPPAKPPPPPQPLPSPAYPAARPPPGPAPF) are enriched in pro residues. A compositionally biased stretch (basic and acidic residues) spans 931 to 940 (PRERAAADRW). Over residues 977–986 (AAPRGAAGRP) the composition is skewed to low complexity. The segment covering 987 to 1001 (LSPPTTQPPQKPPPS) has biased composition (pro residues). Low complexity predominate over residues 1030–1039 (AAAAAAVGPP). The span at 1080 to 1092 (TAPPPRRAAPPPC) shows a compositional bias: pro residues. Residues 1208–1228 (PRRRARCGCPRPHPHRPRASH) are compositionally biased toward basic residues. Residue R1303 is modified to Omega-N-methylarginine. S1313 is subject to Phosphoserine. The PDZ-binding motif lies at 1321–1323 (SEV).

The protein belongs to the glutamate-gated ion channel (TC 1.A.10.1) family. NR2D/GRIN2D subfamily. In terms of assembly, heterotetramer. Forms heterotetrameric channels composed of two GluN1/zeta subunits (GRIN1), and two identical GluN2/epsilon subunits (GRIN2A, GRIN2B, GRIN2C or GRIN2D) or GluN3 subunits (GRIN3A or GRIN3B) (in vitro). In vivo, the subunit composition may depend on the expression levels of the different subunits. Interacts with PDZ domains of PATJ and DLG4. As to expression, detected in neonate brain synaptosomes (at protein level).

The protein localises to the cell membrane. The protein resides in the postsynaptic cell membrane. It catalyses the reaction Ca(2+)(in) = Ca(2+)(out). The catalysed reaction is Na(+)(in) = Na(+)(out). It carries out the reaction K(+)(in) = K(+)(out). In terms of biological role, component of N-methyl-D-aspartate (NMDA) receptors (NMDARs) that function as heterotetrameric, ligand-gated cation channels with high calcium permeability and voltage-dependent block by Mg(2+). Participates in synaptic plasticity for learning and memory formation. Channel activation requires binding of the neurotransmitter L-glutamate to the GluN2 subunit, glycine or D-serine binding to the GluN1 subunit, plus membrane depolarization to eliminate channel inhibition by Mg(2+). NMDARs mediate simultaneously the potasium efflux and the influx of calcium and sodium. Each GluN2 subunit confers differential attributes to channel properties, including activation, deactivation and desensitization kinetics, pH sensitivity, Ca2(+) permeability, and binding to allosteric modulators. In Mus musculus (Mouse), this protein is Glutamate receptor ionotropic, NMDA 2D.